We begin with the raw amino-acid sequence, 1157 residues long: MTLQIIAGKSGTGKTTHLMDEVGKKIKKTSKTYIFIVPDQMTFQMETSFLNKESLSGMLGTQIFSFSRLAWKILQETGGLSKTFLSQTGIEMVIRKAALDQKDKLKIFSKATSRKGFYSELAKLFKEMKQEEVSVADLENSAINMSKSVTNKIHDISLIYQKYEELLAGKFLENEDYLRLLADKIIESDYLNQTEIIIDGFTSFSKQELTVIEKLMEKCDKVTVSLTLNVPEIQKGLEEYNMFKQSTEAYFALLEMAKLNKISVESDKLFLENKRAKSDSLAFLADVWGNNKFVTFEEKPQDLAIHQANNRRAEIEGIAREIRQLTLKGYRYQDMAILTRNISDYDVLCETVMESFDIPIFIDKKRAMAKHPFIEFIRSSIDAILFNWKYEPIFQAVKTEFFFDVSENTSIMRRKADILENYVLENGIQNKWKWEKEGDWIYRKIRGLSTNLLPQTDEELETQAIINEMRNLIVEPLSILENNLAKARTGTEFAMALYHFLEQVKAVEHLESWRQTAEENGYLELAREHEQAWSSVSELLDEFVEVLGEESLDINSFAEIVATGLDALEFSLLPPSLDQIVLSDMENAKLLDMKVIFAIGMNDGIMPLRQKDKGILSDQDRDSLRAENSNLKPSAKNNIGEEDLLAYKIISLPSDKLFLSYPAADEEGKVLSESNYLRKIKGQFKKLNEEVYLTDPSLLSDEEQSSYIRSKQATLGLLTSQLQMYKRGYPLSNVWWDAYNGYFEDTKESKVAKQVLSSLYYENKTKALHETTAKNLFGENIHASVSRMEKFFSCEFQHFAQYGLKLEERAHFKLQAVDMGEIFHGAMEWISAELKRNNQDWGNLTEEECRQMAKLAMTFLAPKIQHEILLSSKRMEYIQYKLLQIITRATTVLNEQAKSSAFRPIGLEVDFGLKGDIPSLKIPLKSESELLLQGRIDRIDVAEQDDRTFLRIIDYKSSSHDLALTEVYYGLALQMLTYLDIVVTNAQKMIGKTAEPAGVLYFHMHNQFVQADKELSDEAIAKELQKSSKMKGLILSDPVAVSLMDTSLEKGKSSNIIPAEIKQNGDLSARSRTATKEEFDKMRHFVRHKYQEAGNKILDGAVSINPYKLKERTPCQFCGFRSFCGFDPSLTSNQYRHLTNEKAENILTKMDIEGGTQ.

In terms of domain architecture, UvrD-like helicase ATP-binding spans 1–277; that stretch reads MTLQIIAGKS…KLFLENKRAK (277 aa). 8–15 contributes to the ATP binding site; that stretch reads GKSGTGKT. The region spanning 272–578 is the UvrD-like helicase C-terminal domain; it reads ENKRAKSDSL…EFSLLPPSLD (307 aa). C794, C1115, C1118, and C1124 together coordinate [4Fe-4S] cluster.

The protein belongs to the helicase family. AddB/RexB type 1 subfamily. In terms of assembly, heterodimer of AddA and AddB. It depends on Mg(2+) as a cofactor. [4Fe-4S] cluster serves as cofactor.

Functionally, the heterodimer acts as both an ATP-dependent DNA helicase and an ATP-dependent, dual-direction single-stranded exonuclease. Recognizes the chi site generating a DNA molecule suitable for the initiation of homologous recombination. The AddB subunit has 5' -&gt; 3' nuclease activity but not helicase activity. This Listeria welshimeri serovar 6b (strain ATCC 35897 / DSM 20650 / CCUG 15529 / CIP 8149 / NCTC 11857 / SLCC 5334 / V8) protein is ATP-dependent helicase/deoxyribonuclease subunit B.